The chain runs to 333 residues: Flotillin-like protein FloA (333 aa).

2 helical membrane passes run 8-28 (LMPIILLALALILISVVFTFI) and 30-50 (VGLWISALAAGVNVGIFTLVG).

It belongs to the flotillin-like FloA family. Homooligomerizes.

It localises to the cell membrane. Its subcellular location is the membrane raft. Functionally, found in functional membrane microdomains (FMM) that may be equivalent to eukaryotic membrane rafts. FMMs are highly dynamic and increase in number as cells age. Flotillins are thought to be important factors in membrane fluidity. In Desulfitobacterium hafniense (strain DSM 10664 / DCB-2), this protein is Flotillin-like protein FloA.